The sequence spans 69 residues: Intrepicalcin (69 aa).

Residues 1 to 27 form the signal peptide; that stretch reads MRQNTMTIIFIVFIVTFASLTIYGAEA. Residues 28–36 constitute a propeptide that is removed on maturation; it reads SEANFLERR. 3 cysteine pairs are disulfide-bonded: C39-C53, C46-C57, and C52-C68. The tract at residues 59 to 60 is essential for stimulation of [3H]ryanodine binding to RYR1; sequence RR.

The protein belongs to the scorpion calcin family. Expressed by the venom gland.

It is found in the secreted. This toxin stabilizes ryanodine receptor 1 (RyR1) opening in a long-lasting subconductance state (55% of the full conductance state). Furthermore, it triggers calcium release from sarcoplasmic vesicles (45.3 nM are enough to induce a sharp release, and 50% of the total calcium is released after toxin (100 nM) addition) probably by acting as a cell-penetrating peptide (CPP). In addition, it has been shown to dose-dependently stimulate ryanodine binding to RyR1 (EC(50)=17.4 nM). It also augments the bell-shaped calcium-[3H]ryanodine binding curve that is maximal at about 10 uM calcium concentration. It binds a different site as ryanodine. It acts synergistically with caffeine. In vivo, intracerebroventricular injection into mice induces neurotoxic symptoms, followed by death. This Thorellius intrepidus (Scorpion) protein is Intrepicalcin.